A 395-amino-acid polypeptide reads, in one-letter code: Putative gustatory receptor 58a (395 aa).

Residues 1 to 32 (MLLKFMYIYGIGCGLMPAPLKKGQFLLGYKQR) lie on the Cytoplasmic side of the membrane. Residues 33–53 (WYLIYTACLHGGLLTVLPFTF) traverse the membrane as a helical segment. Residues 54-72 (PHYMYDDSYMSSNPVLKWT) are Extracellular-facing. A helical membrane pass occupies residues 73–93 (FNLTNITRIMAMFSGVLLMWF). Residues 94 to 131 (RRKRILNLGENLILHCLKCKTLDNRSKKYSKLRKRVRN) are Cytoplasmic-facing. A helical membrane pass occupies residues 132 to 152 (VLFQMLLVANLSILLGALILF). Residues 153 to 169 (RIHSVQRISKTAMIVAH) are Extracellular-facing. A helical transmembrane segment spans residues 170 to 190 (ITQFIYVVFMMTGICVILLVL). The Cytoplasmic portion of the chain corresponds to 191–250 (HWQSERLQIALKDLCSFLNHEERNSLTLSENKANRSLGKLAKLFKLFAENQRLVREVFRT). A helical transmembrane segment spans residues 251 to 271 (FDLPIALLLLKMFVTNVNLVY). At 272 to 288 (HGVQFGNDTIETSSYTR) the chain is on the extracellular side. N278 is a glycosylation site (N-linked (GlcNAc...) asparagine). A helical membrane pass occupies residues 289–309 (IVGQWVVISHYWSAVLLMNVV). The Cytoplasmic portion of the chain corresponds to 310–366 (DDVTRRSDLKMGDLLREFSHLELVKRDFHLQLELFSDHLRCHPSTYKVCGLFIFNKQ). A helical transmembrane segment spans residues 367 to 387 (TSLAYFFYVLVQVLVLVQFDL). The Extracellular portion of the chain corresponds to 388–395 (KNKVEKRN).

This sequence belongs to the insect chemoreceptor superfamily. Gustatory receptor (GR) family. Gr22e subfamily. As to expression, expressed in the adult labellar chemosensory neurons.

The protein resides in the cell membrane. In terms of biological role, probable gustatory receptor which mediates acceptance or avoidance behavior, depending on its substrates. This is Putative gustatory receptor 58a (Gr58a) from Drosophila melanogaster (Fruit fly).